The primary structure comprises 110 residues: Cytochrome c6 (110 aa).

A signal peptide spans methionine 1–alanine 25. 4 residues coordinate heme c: cysteine 39, cysteine 42, histidine 43, and methionine 83.

This sequence belongs to the cytochrome c family. PetJ subfamily. Monomer. In terms of processing, binds 1 heme c group covalently per subunit.

The protein localises to the cellular thylakoid lumen. In terms of biological role, functions as an electron carrier between membrane-bound cytochrome b6-f and photosystem I in oxygenic photosynthesis. The protein is Cytochrome c6 of Gloeothece citriformis (strain PCC 7424) (Cyanothece sp. (strain PCC 7424)).